A 232-amino-acid chain; its full sequence is Sugar fermentation stimulation protein homolog (232 aa).

This sequence belongs to the SfsA family.

The protein is Sugar fermentation stimulation protein homolog of Geobacter sulfurreducens (strain ATCC 51573 / DSM 12127 / PCA).